Reading from the N-terminus, the 362-residue chain is Probable endopolygalacturonase II (362 aa).

The N-terminal stretch at methionine 1–serine 20 is a signal peptide. Residues alanine 21–arginine 27 constitute a propeptide that is removed on maturation. A disulfide bond links cysteine 30 and cysteine 45. The stretch at serine 156–asparagine 186 is one PbH1 1 repeat. Catalysis depends on aspartate 201, which acts as the Proton donor. Cysteine 203 and cysteine 219 are disulfide-bonded. PbH1 repeat units follow at residues glycine 209–serine 229, valine 238–threonine 259, valine 267–glutamine 289, and threonine 301–alanine 322. Residue histidine 223 is part of the active site. N-linked (GlcNAc...) asparagine glycosylation occurs at asparagine 240. Disulfide bonds link cysteine 329–cysteine 334 and cysteine 353–cysteine 362.

Belongs to the glycosyl hydrolase 28 family.

Its subcellular location is the secreted. The catalysed reaction is (1,4-alpha-D-galacturonosyl)n+m + H2O = (1,4-alpha-D-galacturonosyl)n + (1,4-alpha-D-galacturonosyl)m.. In terms of biological role, involved in maceration and soft-rotting of plant tissue. Hydrolyzes the 1,4-alpha glycosidic bonds of de-esterified pectate in the smooth region of the plant cell wall. In Aspergillus kawachii (strain NBRC 4308) (White koji mold), this protein is Probable endopolygalacturonase II (pgaII).